Consider the following 904-residue polypeptide: MISGLLKKIFGSRNDRLIKQYSQNVKRINALEPAMQALSDEQLRAKTDEFRQRHANGESLDDLLPEAFAVVREAGQRALGMRHFDVQMIGGMVLHDGKIAEMRTGEGKTLVGTLPAYLNAISGKGVHVITVNDYLATRDSDWMGRLHRFLGLTVGVNLSQMDHEAKQAAYAADITYGTNNEFGFDYLRDNMVYTAGERVQRSLNFAIVDEVDSILIDEARTPLIISGQAEDHTDLYLRMKDVVPNLTRAMEEKDEGDYWVDEKGHQVHLSETGYEHAEQLLAEYGLLKEGTSLYDAANITLMHHLNAALRGMTLFHKDQHYVVQNGEVVIVDEFTGRLMAGRRWSDGLHQAVEAKEGVQIQAENQTLASITFQNYFRMYNKLAGMTGTADTEAYEFHQIYGLETVVIPTHRPMVRKDMNDLVYKTADEKHAAIIADIKDCAKRGQPVLVGTTSIEASELLSGLLDKESLPHQVLNAKQHAREAEIVVQAGRPGMVTIATNMAGRGTDIVLGGNIEKQLAAIRDDESLPVEEREQKAAAMKAEWQEVHNAVLASGGLHIIGSERHESRRIDNQLRGRAGRQGDAGSSRFYLSLDDPLLRIFAGERLRAIMDKLKMPEGEAIEHPLVTRSLESAQRKVEARNFDIRKQLLEYDDVSNDQRKVIYQQRNELLETDDISETITAMRQSVIAETFRTYVPAESVEEQWDMEGLERALASDLQIIAPVAQWFKDEPTLSDEEILERITKNADEAYQAKIDLVGDGTFHQFERNVMLQSLDSHWREHLAALDHLRQGIHLRGYAQKNPKQEYKREAFELFEGLLDLVRREVTRVVFTVQIRTPEDVEETAPHAEVQNVQYQHAGYDEALGEGEGAEAAGQQPADAGPKIGRNDPCPCGSGKKYKHCHGKLS.

Residues Gln87, 105–109 (GEGKT), and Asp507 each bind ATP. The segment at 865–887 (GEGAEAAGQQPADAGPKIGRNDP) is disordered. The segment covering 868 to 880 (AEAAGQQPADAGP) has biased composition (low complexity). The Zn(2+) site is built by Cys888, Cys890, Cys899, and His900.

This sequence belongs to the SecA family. Monomer and homodimer. Part of the essential Sec protein translocation apparatus which comprises SecA, SecYEG and auxiliary proteins SecDF-YajC and YidC. The cofactor is Zn(2+).

The protein resides in the cell inner membrane. The protein localises to the cytoplasm. It carries out the reaction ATP + H2O + cellular proteinSide 1 = ADP + phosphate + cellular proteinSide 2.. Part of the Sec protein translocase complex. Interacts with the SecYEG preprotein conducting channel. Has a central role in coupling the hydrolysis of ATP to the transfer of proteins into and across the cell membrane, serving both as a receptor for the preprotein-SecB complex and as an ATP-driven molecular motor driving the stepwise translocation of polypeptide chains across the membrane. The sequence is that of Protein translocase subunit SecA from Dechloromonas aromatica (strain RCB).